Here is an 80-residue protein sequence, read N- to C-terminus: uncharacterized protein (80 aa).

The first 15 residues, 1 to 15 (MVKLSFTLRFGDVWV), serve as a signal peptide directing secretion.

This is an uncharacterized protein from Archaeoglobus fulgidus (strain ATCC 49558 / DSM 4304 / JCM 9628 / NBRC 100126 / VC-16).